Here is a 336-residue protein sequence, read N- to C-terminus: Phospho-N-acetylmuramoyl-pentapeptide-transferase (336 aa).

10 consecutive transmembrane segments (helical) span residues 3-23 (LTLIAAIISFMVSAFTMPYFI), 53-73 (GGTVFLLVATAVSLLVSLFSI), 78-98 (SLALISGILSIVVIYGIIGFL), 118-138 (LALQLVGGLMFYFLHVSPSGI), 143-163 (VFGYQLPLGIFYLFFVLFWVV), 174-194 (GIDGLASISVVISLVTYGVIA), 200-220 (FDVLLLIGAMIGALLGFFCFN), 226-246 (VFMGDVGSLALGAMLAAISIA), 251-271 (WTLLIIGIVYVLETSSVMLQV), and 316-336 (AFLWGVGSLASLLVLAILYVF).

This sequence belongs to the glycosyltransferase 4 family. MraY subfamily. It depends on Mg(2+) as a cofactor.

The protein localises to the cell membrane. The catalysed reaction is UDP-N-acetyl-alpha-D-muramoyl-L-alanyl-gamma-D-glutamyl-L-lysyl-D-alanyl-D-alanine + di-trans,octa-cis-undecaprenyl phosphate = Mur2Ac(oyl-L-Ala-gamma-D-Glu-L-Lys-D-Ala-D-Ala)-di-trans,octa-cis-undecaprenyl diphosphate + UMP. It functions in the pathway cell wall biogenesis; peptidoglycan biosynthesis. Functionally, catalyzes the initial step of the lipid cycle reactions in the biosynthesis of the cell wall peptidoglycan: transfers peptidoglycan precursor phospho-MurNAc-pentapeptide from UDP-MurNAc-pentapeptide onto the lipid carrier undecaprenyl phosphate, yielding undecaprenyl-pyrophosphoryl-MurNAc-pentapeptide, known as lipid I. The protein is Phospho-N-acetylmuramoyl-pentapeptide-transferase of Streptococcus pyogenes serotype M1.